Consider the following 431-residue polypeptide: Enolase (431 aa).

Gln-175 contributes to the (2R)-2-phosphoglycerate binding site. Residue Glu-217 is the Proton donor of the active site. Mg(2+) is bound by residues Asp-254, Glu-295, and Asp-322. (2R)-2-phosphoglycerate-binding residues include Lys-347, Arg-376, Ser-377, and Lys-398. Lys-347 serves as the catalytic Proton acceptor.

The protein belongs to the enolase family. Mg(2+) is required as a cofactor.

The protein localises to the cytoplasm. Its subcellular location is the secreted. It is found in the cell surface. It carries out the reaction (2R)-2-phosphoglycerate = phosphoenolpyruvate + H2O. It participates in carbohydrate degradation; glycolysis; pyruvate from D-glyceraldehyde 3-phosphate: step 4/5. Functionally, catalyzes the reversible conversion of 2-phosphoglycerate (2-PG) into phosphoenolpyruvate (PEP). It is essential for the degradation of carbohydrates via glycolysis. This chain is Enolase, found in Anaplasma marginale (strain St. Maries).